The sequence spans 362 residues: Bifunctional chorismate mutase/prephenate dehydratase (362 aa).

Positions 3-91 constitute a Chorismate mutase domain; it reads QTIDELLIPH…ECLAVERPLT (89 aa). Positions 13, 30, 41, and 52 each coordinate substrate. Residues 92-269 form the Prephenate dehydratase domain; the sequence is IAYLGPQGTF…NTTRFLVMGH (178 aa). The ACT domain occupies 281–356; that stretch reads SLAVSAPNRA…RASFVKAIGS (76 aa).

The protein resides in the cytoplasm. It catalyses the reaction chorismate = prephenate. The catalysed reaction is prephenate + H(+) = 3-phenylpyruvate + CO2 + H2O. It functions in the pathway amino-acid biosynthesis; L-phenylalanine biosynthesis; phenylpyruvate from prephenate: step 1/1. It participates in metabolic intermediate biosynthesis; prephenate biosynthesis; prephenate from chorismate: step 1/1. Functionally, catalyzes the Claisen rearrangement of chorismate to prephenate and the decarboxylation/dehydration of prephenate to phenylpyruvate. This Neisseria gonorrhoeae (strain ATCC 700825 / FA 1090) protein is Bifunctional chorismate mutase/prephenate dehydratase (pheA).